The following is a 576-amino-acid chain: Arginine--tRNA ligase (576 aa).

The short motif at 122 to 132 is the 'HIGH' region element; it reads PNVAKQMHVGH.

Belongs to the class-I aminoacyl-tRNA synthetase family. In terms of assembly, monomer.

It localises to the cytoplasm. It catalyses the reaction tRNA(Arg) + L-arginine + ATP = L-arginyl-tRNA(Arg) + AMP + diphosphate. The chain is Arginine--tRNA ligase from Yersinia pseudotuberculosis serotype O:3 (strain YPIII).